A 681-amino-acid polypeptide reads, in one-letter code: Pseudohemocyanin-2 (681 aa).

Residues 1–21 (VLLCSLVAATAAWPYFGGFQR) form the signal peptide. N-linked (GlcNAc...) asparagine glycosylation is found at Asn98, Asn191, Asn228, and Asn624.

This sequence belongs to the tyrosinase family. Hemocyanin subfamily. In terms of assembly, hexamer. As to expression, strongly expressed in ovaries. Also expressed in heart. Not detected in hepatopancreas, gills, connective tissue or muscle.

Functionally, does not function as a hemocyanin. The protein is Pseudohemocyanin-2 of Homarus americanus (American lobster).